Reading from the N-terminus, the 284-residue chain is Bifunctional protein FolD (284 aa).

Residues 166 to 168 and Ile232 each bind NADP(+); that span reads GAS.

This sequence belongs to the tetrahydrofolate dehydrogenase/cyclohydrolase family. In terms of assembly, homodimer.

It catalyses the reaction (6R)-5,10-methylene-5,6,7,8-tetrahydrofolate + NADP(+) = (6R)-5,10-methenyltetrahydrofolate + NADPH. The catalysed reaction is (6R)-5,10-methenyltetrahydrofolate + H2O = (6R)-10-formyltetrahydrofolate + H(+). It functions in the pathway one-carbon metabolism; tetrahydrofolate interconversion. Its function is as follows. Catalyzes the oxidation of 5,10-methylenetetrahydrofolate to 5,10-methenyltetrahydrofolate and then the hydrolysis of 5,10-methenyltetrahydrofolate to 10-formyltetrahydrofolate. The sequence is that of Bifunctional protein FolD from Shewanella sp. (strain W3-18-1).